The following is a 954-amino-acid chain: Endogenous retrovirus group K member 25 Pol protein (954 aa).

The Reverse transcriptase domain occupies 57-245 (LEKGHIEPSF…TPFHYLGMQI (189 aa)). The LPQG motif lies at 161-164 (LPQG). The YXDD motif lies at 195-198 (YIDD). Residues 460–588 (LENALTVFTD…ADLLVSSALI (129 aa)) enclose the RNase H type-1 domain. The Mg(2+) site is built by Asp469, Glu497, Asp515, and Asp580. An Integrase-type zinc finger spans residues 585–626 (SALIKAQELHALTHVNAAGLKNKFDVTWKLAKDIVQHCTQCQ). 4 residues coordinate Zn(2+): His594, His598, Cys622, and Cys625. Positions 640–801 (RGLCPNALWQ…TSAEQHLTGK (162 aa)) constitute an Integrase catalytic domain. The segment at residues 809-857 (KLIWWKDNKNKTWEIGKVITWGRGFACVSPGENQLPVWIPTRHLKFYNE) is a DNA-binding region (integrase-type). The interval 862–888 (AKKSTSAETETPQSSTVDSQDEQNGDV) is disordered. The segment covering 867–879 (SAETETPQSSTVD) has biased composition (polar residues).

The protein belongs to the beta type-B retroviral polymerase family. HERV class-II K(HML-2) pol subfamily.

It carries out the reaction DNA(n) + a 2'-deoxyribonucleoside 5'-triphosphate = DNA(n+1) + diphosphate. The catalysed reaction is Endonucleolytic cleavage to 5'-phosphomonoester.. Early post-infection, the reverse transcriptase converts the viral RNA genome into double-stranded viral DNA. The RNase H domain of the reverse transcriptase performs two functions. It degrades the RNA template and specifically removes the RNA primer from the RNA/DNA hybrid. Following nuclear import, the integrase catalyzes the insertion of the linear, double-stranded viral DNA into the host cell chromosome. Endogenous Pol proteins may have kept, lost or modified their original function during evolution. The polypeptide is Endogenous retrovirus group K member 25 Pol protein (ERVK-25) (Homo sapiens (Human)).